The primary structure comprises 431 residues: Glucose-1-phosphate adenylyltransferase (431 aa).

Residue K39 participates in beta-D-fructose 1,6-bisphosphate binding. The AMP site is built by R40, H46, and R52. Alpha-D-glucose 1-phosphate is bound at residue Y114. R130 is an AMP binding site. Alpha-D-glucose 1-phosphate-binding positions include G179, 194-195 (EK), and S212. Positions 370 and 386 each coordinate AMP. Beta-D-fructose 1,6-bisphosphate is bound by residues 419–423 (REMLR) and 429–431 (QER).

The protein belongs to the bacterial/plant glucose-1-phosphate adenylyltransferase family. As to quaternary structure, homotetramer.

The catalysed reaction is alpha-D-glucose 1-phosphate + ATP + H(+) = ADP-alpha-D-glucose + diphosphate. The protein operates within glycan biosynthesis; glycogen biosynthesis. With respect to regulation, allosterically activated by fructose-1,6-bisphosphate (F16BP) and inhibited by AMP. Functionally, involved in the biosynthesis of ADP-glucose, a building block required for the elongation reactions to produce glycogen. Catalyzes the reaction between ATP and alpha-D-glucose 1-phosphate (G1P) to produce pyrophosphate and ADP-Glc. The protein is Glucose-1-phosphate adenylyltransferase of Escherichia coli O7:K1 (strain IAI39 / ExPEC).